A 127-amino-acid chain; its full sequence is Fluoride-specific ion channel FluC (127 aa).

The next 4 membrane-spanning stretches (helical) occupy residues 4 to 24, 39 to 59, 68 to 88, and 102 to 122; these read LDYLTIAFGGAIGAVLRYLVS, GTIIVNSVGSFFLSFLMFAAI, AILFFGTGLLGAFTTFSTFTY, and VAYALANLLFAFTCAYFGMIL. 2 residues coordinate Na(+): G78 and T81.

It belongs to the fluoride channel Fluc/FEX (TC 1.A.43) family.

The protein localises to the cell inner membrane. The enzyme catalyses fluoride(in) = fluoride(out). With respect to regulation, na(+) is not transported, but it plays an essential structural role and its presence is essential for fluoride channel function. Functionally, fluoride-specific ion channel. Important for reducing fluoride concentration in the cell, thus reducing its toxicity. The protein is Fluoride-specific ion channel FluC of Thermotoga maritima (strain ATCC 43589 / DSM 3109 / JCM 10099 / NBRC 100826 / MSB8).